The primary structure comprises 554 residues: Serine/threonine-protein kinase ROP18 (554 aa).

The helical transmembrane segment at 17-40 (GLATLLPKTACLAGLNVALVFLLF) threads the bilayer. Positions 252-531 (LVRGAPLGSG…PLQALETAAF (280 aa)) constitute a Protein kinase domain. ATP contacts are provided by Gly262, Ala264, and Lys281. Asn306 carries an N-linked (GlcNAc...) asparagine glycan. ATP-binding residues include Met357, Ala359, and Asp362. The N-linked (GlcNAc...) asparagine glycan is linked to Asn377. The active-site Proton acceptor is the Asp409. Asp427 serves as a coordination point for ATP. Asp427 contacts Mg(2+). Asn434 carries an N-linked (GlcNAc...) asparagine glycan. An intrachain disulfide couples Cys478 to Cys497.

The protein belongs to the protein kinase superfamily. Ser/Thr protein kinase family. In terms of assembly, component of a complex at least composed of ROP18, GRA7 and ROP2. Component of a complex at least composed of ROP18 and ROP5. Interacts with GRA7 in the absence of ROP5. Interacts with mouse IRGB6 (TGTP1/TGTP2).

The protein resides in the parasitophorous vacuole membrane. The protein localises to the cytoplasmic vesicle. Its subcellular location is the secretory vesicle. It localises to the rhoptry. The enzyme catalyses L-threonyl-[protein] + ATP = O-phospho-L-threonyl-[protein] + ADP + H(+). It carries out the reaction L-seryl-[protein] + ATP = O-phospho-L-seryl-[protein] + ADP + H(+). Kinase activity is enhanced by polymorphic pseudokinase ROP5. Functionally, protein kinase. Virulence factor. Mediates parasite survival in mouse macrophages and monocytes. Reduces the accumulation of mouse IRGA6 (IIGP1) and IRGB6 (TGTP1/TGTP2), immunity-related GTPases (IRGs) that protect mice from infection by certain intracellular pathogens, on the parasitophorous vacuole and IRG-mediated killing of parasites by mouse cells; probably in connection with ROP5. In complex with GRA7, targets IRGs to prevent IRG-mediated parasite killing by mouse cells. Phosphorylates mouse IRGA6 (IIGP1); its activity toward mouse IRGA6 is promoted by GRA7 or ROP5. Phosphorylates mouse IRGB6 (TGTP1/TGTP2). Phosphorylates mouse IRGB10 (GM12250). Does not affect IFN-gamma (IFNG)-mediated parasite killing in human cells that do not possess the large variety of IRGs. This chain is Serine/threonine-protein kinase ROP18, found in Toxoplasma gondii.